A 294-amino-acid chain; its full sequence is Fatty acyl-CoA reductase Rv0547c (294 aa).

Residues S49, S50, I52, R72, D97, L98, N124, Y192, K196, V225, and T227 each coordinate NADP(+). Y192 serves as the catalytic Proton acceptor.

Belongs to the short-chain dehydrogenases/reductases (SDR) family.

It localises to the host mitochondrion. The enzyme catalyses hexadecanal + NADP(+) + CoA = hexadecanoyl-CoA + NADPH + H(+). Its function is as follows. Oxidoreductase that promotes the persistence of M.tuberculosis in host macrophages by reprogramming the fatty acid metabolism in host mitochondria. When localized in the host mitochondria, it potentially acts on unknown lipid substrates and converts them into products that directly or indirectly alter the lipid profile of the mitochondria. This change in lipid profile results in increased mitochondrial membrane fluidity, enhanced endogenous fatty acid oxidation and increased mitochondrial spare respiratory capacity. All these events eventually favor M.tuberculosis persistence in the host macrophages. In vitro, can catalyze the NADPH-dependent reduction of palmitoyl-CoA (hexadecanoyl-CoA). This chain is Fatty acyl-CoA reductase Rv0547c, found in Mycobacterium tuberculosis (strain ATCC 25618 / H37Rv).